The sequence spans 99 residues: A-type ATP synthase subunit F (99 aa).

Belongs to the V-ATPase F subunit family. In terms of assembly, has multiple subunits with at least A(3), B(3), C, D, E, F, H, I and proteolipid K(x).

It localises to the cell membrane. Functionally, component of the A-type ATP synthase that produces ATP from ADP in the presence of a proton gradient across the membrane. This is A-type ATP synthase subunit F from Methanococcus maripaludis (strain DSM 14266 / JCM 13030 / NBRC 101832 / S2 / LL).